The following is a 188-amino-acid chain: Peroxidase B (188 aa).

Belongs to the peroxidase family. Post-translationally, partially N-glycosylated.

It localises to the secreted. It catalyses the reaction 2 a phenolic donor + H2O2 = 2 a phenolic radical donor + 2 H2O. The protein is Peroxidase B of Aloe vera (Aloe).